The chain runs to 99 residues: U1-theraphotoxin-Lsp1c (99 aa).

An N-terminal signal peptide occupies residues 1-23; the sequence is MRKITIRALLLCSLLLVFHTSAA. The propeptide occupies 24–50; sequence AELQAQEGHLMIPGDTDTALETVDDER. 4 cysteine pairs are disulfide-bonded: cysteine 54–cysteine 67, cysteine 58–cysteine 91, cysteine 72–cysteine 74, and cysteine 85–cysteine 96.

It belongs to the neurotoxin 12 (Hwtx-2) family. 04 (lasiotoxin) subfamily. In terms of tissue distribution, expressed by the venom gland.

It is found in the secreted. Toxin that causes irreversible contractile paralysis into adult Aedes aegypti resulting in 100% mortality after 24 hours. This Lasiodora sp. (strain IBSP 8539) (Brazilian salmon pink birdeater) protein is U1-theraphotoxin-Lsp1c.